Consider the following 248-residue polypeptide: Segregation and condensation protein A (248 aa).

It belongs to the ScpA family. As to quaternary structure, component of a cohesin-like complex composed of ScpA, ScpB and the Smc homodimer, in which ScpA and ScpB bind to the head domain of Smc. The presence of the three proteins is required for the association of the complex with DNA.

It is found in the cytoplasm. Its function is as follows. Participates in chromosomal partition during cell division. May act via the formation of a condensin-like complex containing Smc and ScpB that pull DNA away from mid-cell into both cell halves. The chain is Segregation and condensation protein A from Clostridium perfringens (strain ATCC 13124 / DSM 756 / JCM 1290 / NCIMB 6125 / NCTC 8237 / Type A).